We begin with the raw amino-acid sequence, 571 residues long: Proline--tRNA ligase (571 aa).

It belongs to the class-II aminoacyl-tRNA synthetase family. ProS type 1 subfamily. In terms of assembly, homodimer.

The protein resides in the cytoplasm. It catalyses the reaction tRNA(Pro) + L-proline + ATP = L-prolyl-tRNA(Pro) + AMP + diphosphate. Catalyzes the attachment of proline to tRNA(Pro) in a two-step reaction: proline is first activated by ATP to form Pro-AMP and then transferred to the acceptor end of tRNA(Pro). As ProRS can inadvertently accommodate and process non-cognate amino acids such as alanine and cysteine, to avoid such errors it has two additional distinct editing activities against alanine. One activity is designated as 'pretransfer' editing and involves the tRNA(Pro)-independent hydrolysis of activated Ala-AMP. The other activity is designated 'posttransfer' editing and involves deacylation of mischarged Ala-tRNA(Pro). The misacylated Cys-tRNA(Pro) is not edited by ProRS. This Shewanella frigidimarina (strain NCIMB 400) protein is Proline--tRNA ligase.